The primary structure comprises 521 residues: NAD(P)H-quinone oxidoreductase subunit 2 (521 aa).

Transmembrane regions (helical) follow at residues 16-36, 43-63, 80-100, 110-130, 133-153, 168-188, 211-231, 245-265, 279-299, 307-327, 335-355, 379-399, 401-421, and 467-487; these read ILPEGIVIITLMVVLIGDLIG, WLPYGAIAGLLAALFALYTAW, LSIVFRGIIALSTIVTLLMSI, LAEFIGIMLTATLGGMFLSGA, LVMIFISLEMLSISSYLMTGY, LLIGASSSAIFLYGSSLLYGL, LGLAIALVFVIAGIAFKISAV, PTPVVAFLSVGSKAAGFALAI, WHLIFTALAILSMVLGNVVAL, MLAYSSIGQAGFVMIGLTAGT, VFYLLVYLFMNLGAFSGVILF, LGLSLCLLSLGGIPPLAGFFG, IYLFWAGWQAELYGLVLLALV, and VGLVLSVIATSLAGILSNPLF.

Belongs to the complex I subunit 2 family. In terms of assembly, NDH-1 can be composed of about 15 different subunits; different subcomplexes with different compositions have been identified which probably have different functions.

The protein resides in the cellular thylakoid membrane. The enzyme catalyses a plastoquinone + NADH + (n+1) H(+)(in) = a plastoquinol + NAD(+) + n H(+)(out). It carries out the reaction a plastoquinone + NADPH + (n+1) H(+)(in) = a plastoquinol + NADP(+) + n H(+)(out). NDH-1 shuttles electrons from an unknown electron donor, via FMN and iron-sulfur (Fe-S) centers, to quinones in the respiratory and/or the photosynthetic chain. The immediate electron acceptor for the enzyme in this species is believed to be plastoquinone. Couples the redox reaction to proton translocation, and thus conserves the redox energy in a proton gradient. Cyanobacterial NDH-1 also plays a role in inorganic carbon-concentration. This chain is NAD(P)H-quinone oxidoreductase subunit 2, found in Crocosphaera subtropica (strain ATCC 51142 / BH68) (Cyanothece sp. (strain ATCC 51142)).